Reading from the N-terminus, the 95-residue chain is Co-chaperonin GroES (95 aa).

This sequence belongs to the GroES chaperonin family. Heptamer of 7 subunits arranged in a ring. Interacts with the chaperonin GroEL.

Its subcellular location is the cytoplasm. Its function is as follows. Together with the chaperonin GroEL, plays an essential role in assisting protein folding. The GroEL-GroES system forms a nano-cage that allows encapsulation of the non-native substrate proteins and provides a physical environment optimized to promote and accelerate protein folding. GroES binds to the apical surface of the GroEL ring, thereby capping the opening of the GroEL channel. This Rhodobacter capsulatus (Rhodopseudomonas capsulata) protein is Co-chaperonin GroES.